The following is a 173-amino-acid chain: Xanthine-guanine phosphoribosyltransferase (173 aa).

Residues 48–49 (RG) and 107–115 (DDLVDTGKT) contribute to the 5-phospho-alpha-D-ribose 1-diphosphate site. D108 is a Mg(2+) binding site. The guanine site is built by D111 and I154. Xanthine contacts are provided by D111 and I154. GMP is bound by residues 111-115 (DTGKT) and 153-154 (WI).

Belongs to the purine/pyrimidine phosphoribosyltransferase family. XGPT subfamily. Homotetramer. Mg(2+) serves as cofactor.

The protein resides in the cell inner membrane. It carries out the reaction GMP + diphosphate = guanine + 5-phospho-alpha-D-ribose 1-diphosphate. The catalysed reaction is XMP + diphosphate = xanthine + 5-phospho-alpha-D-ribose 1-diphosphate. It catalyses the reaction IMP + diphosphate = hypoxanthine + 5-phospho-alpha-D-ribose 1-diphosphate. The protein operates within purine metabolism; GMP biosynthesis via salvage pathway; GMP from guanine: step 1/1. It participates in purine metabolism; XMP biosynthesis via salvage pathway; XMP from xanthine: step 1/1. In terms of biological role, purine salvage pathway enzyme that catalyzes the transfer of the ribosyl-5-phosphate group from 5-phospho-alpha-D-ribose 1-diphosphate (PRPP) to the N9 position of the 6-oxopurines guanine and xanthine to form the corresponding ribonucleotides GMP (guanosine 5'-monophosphate) and XMP (xanthosine 5'-monophosphate), with the release of PPi. To a lesser extent, also acts on hypoxanthine. This Rhodopseudomonas palustris (strain ATCC BAA-98 / CGA009) protein is Xanthine-guanine phosphoribosyltransferase.